Consider the following 116-residue polypeptide: Large ribosomal subunit protein bL20 (116 aa).

The protein belongs to the bacterial ribosomal protein bL20 family.

Its function is as follows. Binds directly to 23S ribosomal RNA and is necessary for the in vitro assembly process of the 50S ribosomal subunit. It is not involved in the protein synthesizing functions of that subunit. In Mycoplasmopsis pulmonis (strain UAB CTIP) (Mycoplasma pulmonis), this protein is Large ribosomal subunit protein bL20.